Reading from the N-terminus, the 428-residue chain is Enolase (428 aa).

Glutamine 162 is a binding site for (2R)-2-phosphoglycerate. Catalysis depends on glutamate 204, which acts as the Proton donor. Positions 241, 288, and 315 each coordinate Mg(2+). 4 residues coordinate (2R)-2-phosphoglycerate: lysine 340, arginine 369, serine 370, and lysine 391. The active-site Proton acceptor is lysine 340.

This sequence belongs to the enolase family. Mg(2+) is required as a cofactor.

The protein resides in the cytoplasm. It localises to the secreted. Its subcellular location is the cell surface. The catalysed reaction is (2R)-2-phosphoglycerate = phosphoenolpyruvate + H2O. The protein operates within carbohydrate degradation; glycolysis; pyruvate from D-glyceraldehyde 3-phosphate: step 4/5. Catalyzes the reversible conversion of 2-phosphoglycerate (2-PG) into phosphoenolpyruvate (PEP). It is essential for the degradation of carbohydrates via glycolysis. The protein is Enolase of Azobacteroides pseudotrichonymphae genomovar. CFP2.